Here is a 163-residue protein sequence, read N- to C-terminus: MISMVFKRKEAGITDYSKRLKLLKSREKRFIVRITGKGVIAQVAEYSDIGDRILFTVTDKTLAKYGVDLRGNNIQVCYLVGYIAGIESEKNGVESAVLDTGRRKFRKGGRIAACLKGFTDAGIEVPHGEDVFPDKKRIDGKHLKSPVKISEIVKNFKKMEEKA.

The protein belongs to the universal ribosomal protein uL18 family. As to quaternary structure, part of the 50S ribosomal subunit. Contacts the 5S and 23S rRNAs.

Functionally, this is one of the proteins that bind and probably mediate the attachment of the 5S RNA into the large ribosomal subunit, where it forms part of the central protuberance. The chain is Large ribosomal subunit protein uL18 from Thermoplasma acidophilum (strain ATCC 25905 / DSM 1728 / JCM 9062 / NBRC 15155 / AMRC-C165).